The primary structure comprises 462 residues: tRNA-2-methylthio-N(6)-dimethylallyladenosine synthase (462 aa).

The MTTase N-terminal domain occupies 28 to 144; the sequence is KKLFVKTYGC…LPKMMEAVNA (117 aa). 6 residues coordinate [4Fe-4S] cluster: cysteine 37, cysteine 73, cysteine 107, cysteine 181, cysteine 185, and cysteine 188. Residues 167–398 enclose the Radical SAM core domain; it reads ATRGPTAFLT…QALLTQQQRA (232 aa). Residues 401–462 enclose the TRAM domain; the sequence is DAMVGRRVKV…KTNSLTGRLV (62 aa).

It belongs to the methylthiotransferase family. MiaB subfamily. In terms of assembly, monomer. It depends on [4Fe-4S] cluster as a cofactor.

It is found in the cytoplasm. It carries out the reaction N(6)-dimethylallyladenosine(37) in tRNA + (sulfur carrier)-SH + AH2 + 2 S-adenosyl-L-methionine = 2-methylsulfanyl-N(6)-dimethylallyladenosine(37) in tRNA + (sulfur carrier)-H + 5'-deoxyadenosine + L-methionine + A + S-adenosyl-L-homocysteine + 2 H(+). Catalyzes the methylthiolation of N6-(dimethylallyl)adenosine (i(6)A), leading to the formation of 2-methylthio-N6-(dimethylallyl)adenosine (ms(2)i(6)A) at position 37 in tRNAs that read codons beginning with uridine. This Jannaschia sp. (strain CCS1) protein is tRNA-2-methylthio-N(6)-dimethylallyladenosine synthase.